We begin with the raw amino-acid sequence, 486 residues long: MIRRVLPHGMGRGLLTRRPGTRRGGFSLDWDGKVSEIKKKIKSILPGRSCDLLQDTSHLPPEHSDVVIVGGGVLGLSVAYWLKKLESRRGAIRVLVVERDHTYSQASTGLSVGGICQQFSLPENIQLSLFSASFLRNINEYLAVVDAPPLDLRFNPSGYLLLASEKDAAAMESNVKVQRQEGAKVSLMSPDQLRNKFPWINTEGVALASYGMEDEGWFDPWCLLQGLRRKVQSLGVLFCQGEVTRFVSSSQRMLTTDDKAVVLKRIHEVHVKMDRSLEYQPVECAIVINAAGAWSAQIAALAGVGEGPPGTLQGTKLPVEPRKRYVYVWHCPQGPGLETPLVADTSGAYFRREGLGSNYLGGRSPTEQEEPDPANLEVDHDFFQDKVWPHLALRVPAFETLKVQSAWAGYYDYNTFDQNGVVGPHPLVVNMYFATGFSGHGLQQAPGIGRAVAEMVLKGRFQTIDLSPFLFTRFYLGEKIQENNII.

A helical transmembrane segment spans residues 62 to 82; that stretch reads EHSDVVIVGGGVLGLSVAYWL.

Associates with components of the mitochondrial respiratory chain complex I. FAD is required as a cofactor.

Its subcellular location is the mitochondrion inner membrane. Required for the assembly of the mitochondrial membrane respiratory chain NADH dehydrogenase (Complex I). Involved in mid-late stages of complex I assembly. The chain is FAD-dependent oxidoreductase domain-containing protein 1 from Homo sapiens (Human).